A 166-amino-acid chain; its full sequence is MLSKELLAALNEQMNQEYFAAHAYMAMAAYCDKESYDGFANFYIEQAKEERFHGKKIYDYINDRGEHAILDTIKAPKVEFSSILETFKDSLAQERDVTQRFYNLSELARNDKDYATISFLNWFLDEQVEEESTFETHIDYLTRIGDDCNTLYLYEKELAARSFNEQ.

A Ferritin-like diiron domain is found at 2–145 (LSKELLAALN…THIDYLTRIG (144 aa)). Fe cation contacts are provided by Glu17, Glu50, His53, Glu94, and Gln127.

The protein belongs to the ferritin family. Prokaryotic subfamily.

It localises to the cytoplasm. It catalyses the reaction 4 Fe(2+) + O2 + 6 H2O = 4 iron(III) oxide-hydroxide + 12 H(+). Its function is as follows. Iron-storage protein. This chain is Bacterial non-heme ferritin (ftnA), found in Staphylococcus epidermidis (strain ATCC 35984 / DSM 28319 / BCRC 17069 / CCUG 31568 / BM 3577 / RP62A).